The sequence spans 839 residues: Taste receptor type 1 member 2 (839 aa).

An N-terminal signal peptide occupies residues 1–19; sequence MRPRATTICSLFFLLRVLA. Residues 20–566 lie on the Extracellular side of the membrane; sequence EPAKNSDFYL…AFLEWHEAPT (547 aa). N-linked (GlcNAc...) asparagine glycosylation is found at Asn-84, Asn-127, Asn-248, Asn-292, Asn-312, Asn-368, Asn-428, Asn-487, and Asn-527. Residues 567–587 form a helical membrane-spanning segment; it reads IVVALLAALGFLSTLAILVIF. Residues 588-602 are Cytoplasmic-facing; it reads WRHFQTPMVRSAGGP. The chain crosses the membrane as a helical span at residues 603–623; it reads MCFLMLTLLLVAYMVVPVYVG. At 624–635 the chain is on the extracellular side; it reads PPKVSTCFCRQA. The chain crosses the membrane as a helical span at residues 636 to 656; that stretch reads LFPLCFTICISCIAVRSFQIV. The Cytoplasmic portion of the chain corresponds to 657 to 681; sequence CVFKMASRFPRAYSYWVRYQGPYVS. The helical transmembrane segment at 682 to 702 threads the bilayer; the sequence is MAFITVLKMVTVVIGMLATGL. The Extracellular portion of the chain corresponds to 703 to 727; it reads NPTTRIDPDDPKIMIVSCNPNYRNS. A helical transmembrane segment spans residues 728–748; that stretch reads LFFNTGLDLLLSVVGFSFAYM. The Cytoplasmic portion of the chain corresponds to 749 to 760; sequence GKELPTNYNEAK. Residues 761–781 traverse the membrane as a helical segment; sequence FITLSMTFYFTSSVSLCTFMS. Over 782–784 the chain is Extracellular; that stretch reads AYN. Residues 785–805 traverse the membrane as a helical segment; it reads GVLVTIMDLLVTVLNLLAISL. At 806–839 the chain is on the cytoplasmic side; that stretch reads GYFGPKCYMILFYPERNTPAYFNSMIQGYTMRRD.

It belongs to the G-protein coupled receptor 3 family. TAS1R subfamily. Forms heterodimers with TAS1R3.

Its subcellular location is the cell membrane. Putative taste receptor. TAS1R2/TAS1R3 recognizes diverse natural and synthetic sweeteners. This Papio hamadryas (Hamadryas baboon) protein is Taste receptor type 1 member 2 (TAS1R2).